Reading from the N-terminus, the 469-residue chain is Ufm1-specific protease 2 (469 aa).

The residue at position 1 (Met1) is an N-acetylmethionine. Residues Cys302, Asp426, and His428 contribute to the active site.

This sequence belongs to the peptidase C78 family. Expressed in brain.

Its subcellular location is the endoplasmic reticulum. It is found in the cytoplasm. The protein localises to the nucleus. Its function is as follows. Thiol-dependent isopeptidase that specifically cleaves UFM1, a ubiquitin-like modifier protein, from conjugated proteins, such as CD274/PD-L1, CYB5R3, DDRGK1, MRE11, RPL26/uL24, TRIP4 and RPL26/uL24. While it is also able to mediate the processing of UFM1 precursors, a prerequisite for conjugation reactions, UFSP2 mainly acts as a protein deUFMylase that mediates deconjugation of UFM1 from target proteins. Mediates deUFMylation of RPL26/uL24, a critical step to release the UFM1 ribosome E3 ligase (UREL) complex during the recycling of 60S ribosome subunits from the endoplasmic reticulum. Catalyzes deUFMylation of TRIP4, regulating intracellular nuclear receptors transactivation and thereby regulate cell proliferation and differentiation. This chain is Ufm1-specific protease 2, found in Homo sapiens (Human).